Consider the following 427-residue polypeptide: Acetyl-CoA acetyltransferase, mitochondrial (427 aa).

The transit peptide at 1-33 (MAVLAALLRSGARSRSPLLRRLVQEIRYVERSY) directs the protein to the mitochondrion. At Lys66 the chain carries N6-acetyllysine; alternate. The residue at position 66 (Lys66) is an N6-succinyllysine; alternate. Position 78 is an N6-succinyllysine (Lys78). Cys126 (acyl-thioester intermediate) is an active-site residue. N6-acetyllysine; alternate is present on residues Lys174, Lys181, Lys190, and Lys202. An N6-succinyllysine; alternate mark is found at Lys174, Lys181, Lys190, and Lys202. Residue Tyr219 participates in CoA binding. Position 219 (Tyr219) interacts with K(+). An N6-acetyllysine; alternate mark is found at Lys223 and Lys230. 2 positions are modified to N6-succinyllysine; alternate: Lys223 and Lys230. Lys243 carries the post-translational modification N6-succinyllysine. Residues Lys251 and Lys257 each carry the N6-acetyllysine modification. CoA is bound by residues 258–260 (RVD) and Lys263. An N6-acetyllysine; alternate modification is found at Lys263. Lys263 is modified (N6-succinyllysine; alternate). An N6-succinyllysine mark is found at Lys266 and Lys268. Position 273 is an N6-acetyllysine (Lys273). Residues Ala280, Ala281, and Ala283 each coordinate K(+). Residue Ser284 participates in CoA binding. Lys338 bears the N6-acetyllysine mark. Residue Val381 participates in K(+) binding. The Proton donor/acceptor role is filled by Cys413.

The protein belongs to the thiolase-like superfamily. Thiolase family. In terms of assembly, homotetramer. Succinylation at Lys-268, adjacent to a coenzyme A binding site. Desuccinylated by SIRT5.

The protein resides in the mitochondrion. The enzyme catalyses 2 acetyl-CoA = acetoacetyl-CoA + CoA. It catalyses the reaction propanoyl-CoA + acetyl-CoA = 2-methyl-3-oxobutanoyl-CoA + CoA. It participates in lipid metabolism; fatty acid beta-oxidation. Its activity is regulated as follows. Activated by potassium ions, but not sodium ions. Functionally, this is one of the enzymes that catalyzes the last step of the mitochondrial beta-oxidation pathway, an aerobic process breaking down fatty acids into acetyl-CoA. Using free coenzyme A/CoA, catalyzes the thiolytic cleavage of medium- to long-chain 3-oxoacyl-CoAs into acetyl-CoA and a fatty acyl-CoA shortened by two carbon atoms. The activity of the enzyme is reversible and it can also catalyze the condensation of two acetyl-CoA molecules into acetoacetyl-CoA. Thereby, it plays a major role in ketone body metabolism. This Homo sapiens (Human) protein is Acetyl-CoA acetyltransferase, mitochondrial (ACAT1).